The chain runs to 266 residues: Indole-3-glycerol phosphate synthase (266 aa).

It belongs to the TrpC family.

The enzyme catalyses 1-(2-carboxyphenylamino)-1-deoxy-D-ribulose 5-phosphate + H(+) = (1S,2R)-1-C-(indol-3-yl)glycerol 3-phosphate + CO2 + H2O. It functions in the pathway amino-acid biosynthesis; L-tryptophan biosynthesis; L-tryptophan from chorismate: step 4/5. This Variovorax paradoxus (strain S110) protein is Indole-3-glycerol phosphate synthase.